The chain runs to 466 residues: Soluble pyridine nucleotide transhydrogenase (466 aa).

An FAD-binding site is contributed by 36–45 (ERYNNVGGGC).

It belongs to the class-I pyridine nucleotide-disulfide oxidoreductase family. Requires FAD as cofactor.

The protein localises to the cytoplasm. The enzyme catalyses NAD(+) + NADPH = NADH + NADP(+). Its function is as follows. Conversion of NADPH, generated by peripheral catabolic pathways, to NADH, which can enter the respiratory chain for energy generation. This Yersinia enterocolitica serotype O:8 / biotype 1B (strain NCTC 13174 / 8081) protein is Soluble pyridine nucleotide transhydrogenase.